The chain runs to 312 residues: tRNA dimethylallyltransferase (312 aa).

Residue 13–20 (GPTAVGKT) coordinates ATP. A substrate-binding site is contributed by 15-20 (TAVGKT). Interaction with substrate tRNA stretches follow at residues 38-41 (DSVQ) and 163-167 (QRVVR).

It belongs to the IPP transferase family. Monomer. Mg(2+) serves as cofactor.

It catalyses the reaction adenosine(37) in tRNA + dimethylallyl diphosphate = N(6)-dimethylallyladenosine(37) in tRNA + diphosphate. Functionally, catalyzes the transfer of a dimethylallyl group onto the adenine at position 37 in tRNAs that read codons beginning with uridine, leading to the formation of N6-(dimethylallyl)adenosine (i(6)A). This Exiguobacterium sibiricum (strain DSM 17290 / CCUG 55495 / CIP 109462 / JCM 13490 / 255-15) protein is tRNA dimethylallyltransferase.